Reading from the N-terminus, the 471-residue chain is Sestrin-2 (471 aa).

An N-acetylmethionine modification is found at M1. The N-terminal domain; mediates the alkylhydroperoxide reductase activity stretch occupies residues 57–230; sequence GLEALMSSGR…APSPPSEQST (174 aa). The Cysteine sulfenic acid (-SOH) intermediate role is filled by C116. K166 participates in a covalent cross-link: Glycyl lysine isopeptide (Lys-Gly) (interchain with G-Cter in ubiquitin). The disordered stretch occupies residues 212-241; that stretch reads DPEGSPAPQAPSPPSEQSTPPSRDSLNHSG. S240 is subject to Phosphoserine. The C-terminal domain; mediates TORC1 regulation stretch occupies residues 299–471; sequence ANPDMLCFVE…ALRAITRYMT (173 aa). L-leucine is bound by residues 365–368, T377, and E442; that span reads TYNT.

The protein belongs to the sestrin family. In terms of assembly, interacts with the GATOR2 complex which is composed of MIOS, SEC13, SEH1L, WDR24 and WDR59; the interaction is negatively regulated by leucine. Conveys leucine availability via direct interaction with SEH1L and WDR24 components of the GATOR2 complex. Interacts with RRAGA, RRAGB, RRAGC and RRAGD; may function as a guanine nucleotide dissociation inhibitor for RRAGs and regulate them. May interact with the TORC2 complex. Interacts with KEAP1, RBX1, SQSTM and ULK1; to regulate the degradation of KEAP1. May also associate with the complex composed of TSC1, TSC2 and the AMP-responsive protein kinase/AMPK to regulate TORC1 signaling. May interact with PRDX1. In terms of processing, phosphorylated by ULK1 at multiple sites. Post-translationally, ubiquitinated at Lys-166 by RNF167 via 'Lys-63'-linked polyubiquitination in response to leucine deprivation: ubiquitination promotes SESN2-interaction with the GATOR2 complex, leading to inhibit the TORC1 signaling pathway. Deubiquitinated at Lys-166 by STAMBPL1, promoting the TORC1 signaling pathway. Ubiquitinated by RNF186; ubiquitination mediates proteasomal degradation.

Its subcellular location is the cytoplasm. It catalyses the reaction a hydroperoxide + L-cysteinyl-[protein] = S-hydroxy-L-cysteinyl-[protein] + an alcohol. Functionally, functions as an intracellular leucine sensor that negatively regulates the mTORC1 signaling pathway through the GATOR complex. In absence of leucine, binds the GATOR subcomplex GATOR2 and prevents mTORC1 signaling. Binding of leucine to SESN2 disrupts its interaction with GATOR2 thereby activating the TORC1 signaling pathway. This stress-inducible metabolic regulator also plays a role in protection against oxidative and genotoxic stresses. May negatively regulate protein translation in response to endoplasmic reticulum stress, via mTORC1. May positively regulate the transcription by NFE2L2 of genes involved in the response to oxidative stress by facilitating the SQSTM1-mediated autophagic degradation of KEAP1. May also mediate TP53 inhibition of TORC1 signaling upon genotoxic stress. Moreover, may prevent the accumulation of reactive oxygen species (ROS) through the alkylhydroperoxide reductase activity born by the N-terminal domain of the protein. Was originally reported to contribute to oxidative stress resistance by reducing PRDX1. However, this could not be confirmed. The chain is Sestrin-2 from Bos taurus (Bovine).